A 105-amino-acid polypeptide reads, in one-letter code: Large ribosomal subunit protein bL21 (105 aa).

It belongs to the bacterial ribosomal protein bL21 family. In terms of assembly, part of the 50S ribosomal subunit. Contacts protein L20.

In terms of biological role, this protein binds to 23S rRNA in the presence of protein L20. The polypeptide is Large ribosomal subunit protein bL21 (Stenotrophomonas maltophilia (strain R551-3)).